The primary structure comprises 360 residues: Histidinol-phosphate aminotransferase (360 aa).

Lysine 222 carries the N6-(pyridoxal phosphate)lysine modification.

This sequence belongs to the class-II pyridoxal-phosphate-dependent aminotransferase family. Histidinol-phosphate aminotransferase subfamily. Homodimer. Requires pyridoxal 5'-phosphate as cofactor.

It catalyses the reaction L-histidinol phosphate + 2-oxoglutarate = 3-(imidazol-4-yl)-2-oxopropyl phosphate + L-glutamate. Its pathway is amino-acid biosynthesis; L-histidine biosynthesis; L-histidine from 5-phospho-alpha-D-ribose 1-diphosphate: step 7/9. The sequence is that of Histidinol-phosphate aminotransferase from Listeria welshimeri serovar 6b (strain ATCC 35897 / DSM 20650 / CCUG 15529 / CIP 8149 / NCTC 11857 / SLCC 5334 / V8).